Consider the following 498-residue polypeptide: MATNTITTTKVTTTTTDVTGLSLIAAHSHISGLGLDDNLQPKENAQGMVGQLSARKAAGVILKMVEAGKIAGRAVLIAGPPSTGKTAIAMGLSQSLGNQVPFTALAASEVFSLELSKTEALTQAFRKSIGIKIKEETEIIEGEVVEIQIDRTITGGHKQGKLTIKTTDMETIYELGNKMIEGLTKEKVLAGDVISIDKASGKITKLGRSFTRARDYDAMGPETKFVQCPEGELQKRKEVVHTISLHEIDVINSRQQGFLALFSGDTGEIRPEVRDQINTKVAEWKEEGKAEIVPGVLFIDEVHMLDIECFSFINRALEDEFSPIVIMATNRGVSRIRGTDYKSPHGMPMDLLDRSITIHTTSYTADEIRTILSIRATEEEVELSGDALALLTKIGQETSLRYAANLISVSQQIALKKKNNTVDLQDIKRAYMLFLDSDRSVQYLEENADQYIDDYGRVTIGQESTDGSTQPQAKQQEVAQPEATQPQSQPEDDKMETD.

79–86 (GPPSTGKT) is an ATP binding site. Residues 458 to 498 (VTIGQESTDGSTQPQAKQQEVAQPEATQPQSQPEDDKMETD) form a disordered region. Polar residues predominate over residues 461 to 489 (GQESTDGSTQPQAKQQEVAQPEATQPQSQ).

It belongs to the RuvB family. In terms of assembly, may form heterododecamers with RVB1. Component of the SWR1 chromatin remodeling complex, the INO80 chromatin remodeling complex, and of the R2TP complex.

It localises to the nucleus. The enzyme catalyses ATP + H2O = ADP + phosphate + H(+). Its function is as follows. DNA helicase which participates in several chromatin remodeling complexes, including the SWR1 and the INO80 complexes. The SWR1 complex mediates the ATP-dependent exchange of histone H2A for the H2A variant HZT1 leading to transcriptional regulation of selected genes by chromatin remodeling. The INO80 complex remodels chromatin by shifting nucleosomes and is involved in DNA repair. Also involved in pre-rRNA processing. This Candida albicans (strain SC5314 / ATCC MYA-2876) (Yeast) protein is RuvB-like helicase 2 (RVB2).